A 339-amino-acid chain; its full sequence is UDP-N-acetylenolpyruvoylglucosamine reductase (339 aa).

The region spanning 18-189 (GIDVKARYFS…LRVRFALTRT (172 aa)) is the FAD-binding PCMH-type domain. Arginine 166 is a catalytic residue. Serine 239 (proton donor) is an active-site residue. Glutamate 335 is an active-site residue.

This sequence belongs to the MurB family. The cofactor is FAD.

Its subcellular location is the cytoplasm. It catalyses the reaction UDP-N-acetyl-alpha-D-muramate + NADP(+) = UDP-N-acetyl-3-O-(1-carboxyvinyl)-alpha-D-glucosamine + NADPH + H(+). It participates in cell wall biogenesis; peptidoglycan biosynthesis. Functionally, cell wall formation. The protein is UDP-N-acetylenolpyruvoylglucosamine reductase of Pseudomonas putida (strain ATCC 47054 / DSM 6125 / CFBP 8728 / NCIMB 11950 / KT2440).